The following is a 333-amino-acid chain: tRNA(Ile)-lysidine synthase (333 aa).

25-30 (SGGPDS) provides a ligand contact to ATP.

The protein belongs to the tRNA(Ile)-lysidine synthase family.

It localises to the cytoplasm. It catalyses the reaction cytidine(34) in tRNA(Ile2) + L-lysine + ATP = lysidine(34) in tRNA(Ile2) + AMP + diphosphate + H(+). Functionally, ligates lysine onto the cytidine present at position 34 of the AUA codon-specific tRNA(Ile) that contains the anticodon CAU, in an ATP-dependent manner. Cytidine is converted to lysidine, thus changing the amino acid specificity of the tRNA from methionine to isoleucine. The sequence is that of tRNA(Ile)-lysidine synthase from Ureaplasma parvum serovar 3 (strain ATCC 700970).